The chain runs to 319 residues: Probable murein peptide carboxypeptidase (319 aa).

Serine 116 acts as the Nucleophile in catalysis. Active-site charge relay system residues include glutamate 214 and histidine 284.

This sequence belongs to the peptidase S66 family.

The protein resides in the cytoplasm. The protein operates within cell wall degradation; peptidoglycan degradation. In terms of biological role, may be involved in the degradation of peptidoglycan by catalyzing the cleavage of the terminal D-alanine residue from cytoplasmic murein peptides. This Bacillus subtilis (strain 168) protein is Probable murein peptide carboxypeptidase (ykfA).